Here is a 311-residue protein sequence, read N- to C-terminus: MLRNQIDKIRLLFRKDRESYLCFYRILGFYPHNIQIYEQALLHKSSAVRSEKGRPLNNERLEFLGDAILDAIVGDIVYKRFEGKREGFLTNTRSKIVQRETLNKLAVEIGLDKLIKYSTRSSSHNSYMYGNAFEAFIGAIYLDQGYERCKQFMEQRIINRYIDLDKISRKEVNFKSKLIEWSQKNKMEVSFELIEQFLDHDSNPVFQTEVRIEGLPAGTGTGYSKKESQQNAAQMAIKKVKDQTFMDTVNEAKSQHSKPSEVETESVEPELTESETMEPDTLETEAPEAETTADKVETTVNEVEATETEKE.

Residues 20-145 form the RNase III domain; it reads YLCFYRILGF…FIGAIYLDQG (126 aa). Mg(2+) is bound at residue Glu62. Asp66 is a catalytic residue. Mg(2+) contacts are provided by Asn131 and Glu134. Glu134 is a catalytic residue. The region spanning 173-242 is the DRBM domain; the sequence is NFKSKLIEWS…AQMAIKKVKD (70 aa). The disordered stretch occupies residues 250–311; it reads NEAKSQHSKP…EVEATETEKE (62 aa). Over residues 262–288 the composition is skewed to acidic residues; that stretch reads VETESVEPELTESETMEPDTLETEAPE.

This sequence belongs to the ribonuclease III family. Homodimer. The cofactor is Mg(2+).

Its subcellular location is the cytoplasm. The enzyme catalyses Endonucleolytic cleavage to 5'-phosphomonoester.. In terms of biological role, digests double-stranded RNA. Involved in the processing of primary rRNA transcript to yield the immediate precursors to the large and small rRNAs (23S and 16S). Processes some mRNAs, and tRNAs when they are encoded in the rRNA operon. Processes pre-crRNA and tracrRNA of type II CRISPR loci if present in the organism. In Bacteroides thetaiotaomicron (strain ATCC 29148 / DSM 2079 / JCM 5827 / CCUG 10774 / NCTC 10582 / VPI-5482 / E50), this protein is Ribonuclease 3.